Here is a 104-residue protein sequence, read N- to C-terminus: Naphthalene 1,2-dioxygenase system, ferredoxin component (104 aa).

In terms of domain architecture, Rieske spans 6-101 (IDAVALYEIP…VKIEGQRVMI (96 aa)). [2Fe-2S] cluster contacts are provided by cysteine 45, histidine 47, cysteine 64, and histidine 67.

The protein belongs to the bacterial ring-hydroxylating dioxygenase ferredoxin component family. In terms of assembly, the naphthalene dioxygenase (NDO) multicomponent enzyme system is composed of an electron transfer component and a dioxygenase component (iron sulfur protein (ISP)). The electron transfer component is composed of a ferredoxin reductase (NdoR) and a ferredoxin (NdoA), and the dioxygenase component is formed of a heterohexamer (trimer of heterodimers) of three large alpha subunits (NdoB) and three small beta subunits (NdoC). Requires [2Fe-2S] cluster as cofactor.

Its pathway is aromatic compound metabolism; naphthalene degradation. Component of the naphthalene dioxygenase (NDO) multicomponent enzyme system which catalyzes the incorporation of both atoms of molecular oxygen into naphthalene to form cis-(1R,2S)-dihydroxy-1,2-dihydronaphthalene. Functions as an intermediate electron transfer protein via a specific interaction with iron sulfur protein components (ISP) (NdoB and NdoC). The polypeptide is Naphthalene 1,2-dioxygenase system, ferredoxin component (Pseudomonas aeruginosa).